A 159-amino-acid polypeptide reads, in one-letter code: C-type lectin 1 (159 aa).

Residues 1 to 23 form the signal peptide; that stretch reads MGRFIFISFGLLVVFFFLSGAKG. Disulfide bonds link cysteine 26/cysteine 37, cysteine 54/cysteine 155, cysteine 61/cysteine 157, and cysteine 130/cysteine 147. A C-type lectin domain is found at 33-156; that stretch reads MYGLCYKIFD…CKVKNAFLCQ (124 aa). Asparagine 118 carries an N-linked (GlcNAc...) asparagine glycan. The Sugar-binding signature appears at 119-121; the sequence is LTD. Ca(2+)-binding residues include aspartate 121, aspartate 127, and asparagine 143.

This sequence belongs to the true venom lectin family. As to quaternary structure, homodimer; disulfide-linked. In terms of tissue distribution, expressed by the venom gland.

The protein localises to the secreted. In terms of biological role, lectin which recognizes specific carbohydrate structures and agglutinates a variety of animal cells by binding to cell-surface glycoproteins and glycolipids. May be a calcium-dependent lectin. This chain is C-type lectin 1, found in Bitis gabonica (Gaboon adder).